The primary structure comprises 521 residues: Cell cycle checkpoint protein hpr-9 (521 aa).

Disordered stretches follow at residues 1–20 (MQAI…TRER), 318–375 (QHEE…NRFV), and 492–521 (GTET…YESR). 2 stretches are compositionally biased toward polar residues: residues 355-370 (ESLS…SLPS) and 493-504 (TETTSKMRMSQQ).

This sequence belongs to the rad9 family. As to quaternary structure, putative component of the toroidal 9-1-1 (RAD9-RAD1-HUS1) complex, composed of hpr-9, mrt-2 and hus-1.

Its function is as follows. May be a component of the 9-1-1 cell-cycle checkpoint response complex that plays a major role in DNA repair. In Caenorhabditis elegans, this protein is Cell cycle checkpoint protein hpr-9.